Reading from the N-terminus, the 361-residue chain is G-protein coupled receptor 68 (361 aa).

Residues 1-12 (MGNITADNTSMN) lie on the Extracellular side of the membrane. Residues Asn3 and Asn8 are each glycosylated (N-linked (GlcNAc...) asparagine). The chain crosses the membrane as a helical span at residues 13 to 49 (CDIDHTIHQTLAPVVYVMVLVVGFPANCLSLYYGYLQ). 2 cysteine pairs are disulfide-bonded: Cys13–Cys258 and Cys94–Cys172. At 50 to 53 (IKAR) the chain is on the cytoplasmic side. A helical membrane pass occupies residues 54 to 84 (NELGVYLCNLTVADLFYICSLPFWLQYVLQH). The Extracellular portion of the chain corresponds to 85-89 (DHWSH). A helical transmembrane segment spans residues 90–125 (DDLSCQVCGILLYENIYISVGFLCCISIDRYLAVAH). At 126 to 133 (PFRFHQFR) the chain is on the cytoplasmic side. The helical transmembrane segment at 134-160 (TLKAAMGVSALIWVKELLTSIYFLMHE) threads the bilayer. Topologically, residues 161-176 (EVVEDADRHRVCFEHY) are extracellular. Residues 161 to 176 (EVVEDADRHRVCFEHY) form an extracellular loop 2 (ECL2) region. The helical transmembrane segment at 177–214 (PLEPRQRGINYYRFLVGFLFPICLLLASYRGILRAVRR) threads the bilayer. The Cytoplasmic portion of the chain corresponds to 215–218 (SHGT). A helical transmembrane segment spans residues 219–254 (QKSRKDQIQRLVLSTVVIFLACFLPYHVLLLVRSLW). Residues 255–260 (ESSCDF) lie on the Extracellular side of the membrane. A helical transmembrane segment spans residues 261 to 289 (AKGIFNAYHFSLLLTSFNCVADPVLYCFV). Topologically, residues 290-361 (SETTHRDLAR…MGGSPAGGLS (72 aa)) are cytoplasmic. The segment at 340–361 (LHPAFQTPHPPGMGGSPAGGLS) is disordered. Positions 351 to 361 (GMGGSPAGGLS) are enriched in gly residues.

This sequence belongs to the G-protein coupled receptor 1 family.

It localises to the cell membrane. Activated by a network of residues that connects an extracellular-facing cavity to Glu-149, a conserved charged residue buried in the transmembrane core of the receptor. Protonation likely drives conformational changes in extracellular loop 2 (ECL2), which stabilizes movement of transmembrane 3 (TM3) and a series of rearrangements that connect the extracellular-facing cavity to Glu-149, a residue only conserved in proton-sensing G-protein coupled receptors. Activated in an allosteric manner by divalent metal ions at the extracellular surface following the order: Cd(2+) &gt; Co(2+) &gt; Ni(2+) &gt; Zn(2+) &gt; Fe(2+) &gt; Ca(2+) &gt; Mg(2+). Its function is as follows. Proton-sensing G-protein coupled receptor activated by extracellular pH, which is required to monitor pH changes and generate adaptive reactions. The receptor is almost silent at pH 7.8 but fully activated at pH 6.8. Ligand binding causes a conformation change that triggers signaling via guanine nucleotide-binding proteins (G proteins) and modulates the activity of downstream effectors, such as phospholipase C. GPR68 is mainly coupled to G(q) G proteins and mediates production of diacylglycerol (DAG) and inositol 1,4,5-trisphosphate (IP3). Acts as a key mechanosensor of fluid shear stress and membrane stretch. Expressed in endothelial cells of small-diameter resistance arteries, where it mediates flow-induced dilation in response to shear stress. May represents an osteoblastic pH sensor regulating cell-mediated responses to acidosis in bone. Acts as a regulator of calcium-sensing receptor CASR in a seesaw manner: GPR68-mediated signaling inhibits CASR signaling in response to protons, while CASR inhibits GPR68 in presence of extracellular calcium. In Bos taurus (Bovine), this protein is G-protein coupled receptor 68 (GPR68).